Reading from the N-terminus, the 142-residue chain is Large ribosomal subunit protein uL13 (142 aa).

This sequence belongs to the universal ribosomal protein uL13 family. Part of the 50S ribosomal subunit.

This protein is one of the early assembly proteins of the 50S ribosomal subunit, although it is not seen to bind rRNA by itself. It is important during the early stages of 50S assembly. This is Large ribosomal subunit protein uL13 from Pseudomonas putida (strain W619).